Reading from the N-terminus, the 1176-residue chain is MSNLKLSNNNNGNQKESSSFFQKVMKSPSTQNLLNSFSSNNSNNNLSNSGSNEVKDTTTNSPSQLPPNYTPPPPPHQIRNSSSIEGGEFSLLNNENSDNNNNNNNNNNNNNNNNNNNNNNNNNNNEQLARTESSVSIISSSSSGSNSGQPNLQRHSSNISTDDSNTTTETYSMSPNQTLNSNIDSSEQQHQDLSSSVNNNNNNNNNNNNNNNNNNNNNNNNNNNNNTHESRKLTRKIAQFISSPKLLQSSISQLPSTPTQQNVEIQTTNGGSSETSPNGLISPRPSNDQPLKEKKKKKFLKTPEIFKHHHHHKESSLSSSTTTPSTTSSLTSSPSSSSLAISSPNTTAATTTNKKSHKKTKSTFDINTEISVPYNVIHKMHVDFDLKWTGHNDFILDEKLGDGAYGSVYKGTHKDLGFTLAIKVIEMKESESVSLQNEINILKNCKSPNIVSYFGSLQTESHIWILLDFCALGSIRDIIESTEKTLNEAQISFVVKNTLKGLIYLHSQNIIHRDVKAANVLLSEGCDVKIADFGVSEKLNGALDQSKEMIGTPLWMAPEVILKKNYDYKADIWSLGITIIEMADGLPPHIDLPPMRAMKMVPNWPPPTFAEPKKWSPLLNDFLARCLVKDPEKRASPIDLLCHPFLKKDRGPDVLSDLVNQLFKIKKKKIDDLKKQQKHQTSQSSSSSSPQSPNATVNGGDIGSDGLSTSIISPIPSSPSDELDNCNNSLKLATSSKGMLSFKGNYTTCRDFQEEEEDSKHLNNNQDEQDDEQDDEDDDDENEDDEDVDPFSTTIFHGKKKGSGNGNGGVTSDQDDEEEDEEEDDEEEEEEEEDDDEINEDEEISATGTMVVRKKKNKSTKKSNKKKNKKNNLSTIGKSGSGNNLLHVAPNKPLPITPPFSISMTNEFKQLETKLFTYIDSSNQKIVNDIKNEIKQLESSIINKININLQQQLSPILLALEEIKQNQHTTSQPKQMQSKLSATNLNEKKLSSSPPSSNSPLTNSVNSSLTTTTTTTTSPVLSRQSSFRSSGSISSSNSSFRPNSAIMSAVNNSSTTTTTNSNSSSSNGGGSGVDISPTMTGRASPSIMKRFTTSSSSSPLSSSSDGFAFNSNSNSSSSDLKRHVITPEELNNSNLVKNKVKMFEDDNSSGSGSNSPSLSTNSSSTNSNNSVTNIKK.

Composition is skewed to low complexity over residues 1-19 and 32-52; these read MSNLKLSNNNNGNQKESSS and NLLNSFSSNNSNNNLSNSGSN. Disordered regions lie at residues 1–231 and 254–361; these read MSNL…HESR and LPST…KKTK. Positions 64–76 are enriched in pro residues; it reads QLPPNYTPPPPPH. Positions 92–133 form a coiled coil; it reads LNNENSDNNNNNNNNNNNNNNNNNNNNNNNNNNNEQLARTES. Composition is skewed to low complexity over residues 93 to 125, 133 to 148, and 156 to 172; these read NNENSDNNNNNNNNNNNNNNNNNNNNNNNNNNN, SSVSIISSSSSGSNSG, and SSNISTDDSNTTTETYS. Polar residues predominate over residues 173–197; that stretch reads MSPNQTLNSNIDSSEQQHQDLSSSV. The segment covering 198–226 has biased composition (low complexity); sequence NNNNNNNNNNNNNNNNNNNNNNNNNNNNN. The span at 254-289 shows a compositional bias: polar residues; the sequence is LPSTPTQQNVEIQTTNGGSSETSPNGLISPRPSNDQ. A compositionally biased stretch (low complexity) spans 316–353; sequence SLSSSTTTPSTTSSLTSSPSSSSLAISSPNTTAATTTN. The region spanning 370 to 383 is the CRIB domain; sequence ISVPYNVIHKMHVD. The region spanning 394–646 is the Protein kinase domain; the sequence is FILDEKLGDG…PIDLLCHPFL (253 aa). ATP is bound by residues 400–408 and K423; that span reads LGDGAYGSV. D514 acts as the Proton acceptor in catalysis. 4 disordered regions span residues 670–723, 753–885, 968–1083, and 1112–1176; these read IDDL…SDEL, QEEE…GNNL, HTTS…TGRA, and NSNS…NIKK. Low complexity-rich tracts occupy residues 682–693 and 710–720; these read SQSSSSSSPQSP and SIISPIPSSPS. Composition is skewed to acidic residues over residues 767–789 and 813–844; these read DEQDDEQDDEDDDDENEDDEDVD and DQDDEEEDEEEDDEEEEEEEEDDDEINEDEEI. Residues 812-873 are a coiled coil; that stretch reads SDQDDEEEDE…NKKKNKKNNL (62 aa). Positions 852 to 870 are enriched in basic residues; sequence VRKKKNKSTKKSNKKKNKK. Composition is skewed to polar residues over residues 873-884 and 968-985; these read LSTIGKSGSGNN and HTTSQPKQMQSKLSATNL. Low complexity-rich tracts occupy residues 991 to 1044, 1051 to 1066, and 1148 to 1176; these read SSSP…RPNS, NNSSTTTTTNSNSSSS, and SSGSGSNSPSLSTNSSSTNSNNSVTNIKK.

It belongs to the protein kinase superfamily. STE Ser/Thr protein kinase family. STE20 subfamily. Requires Mg(2+) as cofactor.

It catalyses the reaction L-seryl-[protein] + ATP = O-phospho-L-seryl-[protein] + ADP + H(+). It carries out the reaction L-threonyl-[protein] + ATP = O-phospho-L-threonyl-[protein] + ADP + H(+). In Dictyostelium discoideum (Social amoeba), this protein is Serine/threonine-protein kinase pakF.